We begin with the raw amino-acid sequence, 211 residues long: uncharacterized protein (211 aa).

The first 20 residues, 1-20, serve as a signal peptide directing secretion; sequence MSRVQISTVLAIDTATPAVT.

This sequence to M.leprae ML0378.

This is an uncharacterized protein from Mycobacterium tuberculosis (strain CDC 1551 / Oshkosh).